We begin with the raw amino-acid sequence, 397 residues long: Guanine nucleotide-binding protein G(s) subunit alpha (397 aa).

The disordered stretch occupies residues 1-23 (MGCLGNSKTEDQRNEEKAQREAN). Glycine 2 carries the N-palmitoyl glycine lipid modification. A lipid anchor (S-palmitoyl cysteine) is attached at cysteine 3. A compositionally biased stretch (basic and acidic residues) spans 8-23 (KTEDQRNEEKAQREAN). Residues 39–397 (ATHRLLLLGA…RMHLRQYELL (359 aa)) form the G-alpha domain. The segment at 42–55 (RLLLLGAGESGKST) is G1 motif. Residues 47–55 (GAGESGKST), 182–189 (LLRCRVLT), 208–212 (DVGGQ), 277–280 (NKQD), and alanine 369 contribute to the GTP site. Mg(2+) contacts are provided by serine 54 and threonine 189. The tract at residues 181–189 (DLLRCRVLT) is G2 motif. A G3 motif region spans residues 204-213 (FHMFDVGGQR). Residues 273–280 (ILFLNKQD) form a G4 motif region. The interval 367–372 (TCAVDT) is G5 motif.

Belongs to the G-alpha family. G(s) subfamily. As to quaternary structure, heterotrimeric G proteins are composed of 3 units; alpha, beta and gamma. The alpha chain contains the guanine nucleotide binding site. Interacts with CRY1; the interaction may block GPCR-mediated regulation of cAMP concentrations. Interacts with ADCY6 and stimulates its adenylyl cyclase activity. Interacts with ADCY2 and ADCY5. Stimulates the ADCY5 adenylyl cyclase activity. Interaction with SASH1.

It is found in the cell membrane. Functionally, guanine nucleotide-binding proteins (G proteins) function as transducers in numerous signaling pathways controlled by G protein-coupled receptors (GPCRs). Signaling involves the activation of adenylyl cyclases, resulting in increased levels of the signaling molecule cAMP. GNAS functions downstream of several GPCRs, including beta-adrenergic receptors. Stimulates the Ras signaling pathway via RAPGEF2. The protein is Guanine nucleotide-binding protein G(s) subunit alpha (GNAS) of Sus scrofa (Pig).